The following is a 230-amino-acid chain: 7-cyano-7-deazaguanine synthase (230 aa).

8 to 18 (FSGGQDSTTCL) provides a ligand contact to ATP. Zn(2+)-binding residues include cysteine 187, cysteine 196, cysteine 199, and cysteine 202.

Belongs to the QueC family. Requires Zn(2+) as cofactor.

The enzyme catalyses 7-carboxy-7-deazaguanine + NH4(+) + ATP = 7-cyano-7-deazaguanine + ADP + phosphate + H2O + H(+). Its pathway is purine metabolism; 7-cyano-7-deazaguanine biosynthesis. Functionally, catalyzes the ATP-dependent conversion of 7-carboxy-7-deazaguanine (CDG) to 7-cyano-7-deazaguanine (preQ(0)). This Shewanella amazonensis (strain ATCC BAA-1098 / SB2B) protein is 7-cyano-7-deazaguanine synthase.